A 130-amino-acid polypeptide reads, in one-letter code: Small ribosomal subunit protein bS18 (130 aa).

2 stretches are compositionally biased toward basic and acidic residues: residues 98–108 and 117–130; these read KKMEESVKSAE and EESKPKRTRKAKTE. A disordered region spans residues 98–130; that stretch reads KKMEESVKSAEPKATAEATEESKPKRTRKAKTE.

The protein belongs to the bacterial ribosomal protein bS18 family. As to quaternary structure, part of the 30S ribosomal subunit. Forms a tight heterodimer with protein bS6.

Functionally, binds as a heterodimer with protein bS6 to the central domain of the 16S rRNA, where it helps stabilize the platform of the 30S subunit. The polypeptide is Small ribosomal subunit protein bS18 (Metamycoplasma arthritidis (strain 158L3-1) (Mycoplasma arthritidis)).